The sequence spans 235 residues: Fms-related tyrosine kinase 3 ligand (235 aa).

Positions Met-1 to Gly-26 are cleaved as a signal peptide. Residues Thr-27–Pro-184 are Extracellular-facing. Cystine bridges form between Cys-30/Cys-111, Cys-70/Cys-153, and Cys-119/Cys-158. N-linked (GlcNAc...) asparagine glycans are attached at residues Asn-126 and Asn-149. The helical transmembrane segment at Pro-185–Leu-205 threads the bilayer. The Cytoplasmic portion of the chain corresponds to His-206 to His-235. Residues Arg-213–His-235 form a disordered region.

As to quaternary structure, homodimer (isoform 2).

It is found in the cell membrane. It localises to the secreted. In terms of biological role, stimulates the proliferation of early hematopoietic cells by activating FLT3. Synergizes well with a number of other colony stimulating factors and interleukins. Required for the development of B cells, and dendritic cells (DCs). The chain is Fms-related tyrosine kinase 3 ligand (FLT3LG) from Homo sapiens (Human).